The chain runs to 566 residues: DNA helicase/primase (566 aa).

Residues Cys17, Cys20, Cys36, and Cys39 each coordinate Zn(2+). Residues 17-39 (CDNCGSSDGNSLFSDGHTFCYVC) form a C4-like; zinc ribbon fold zinc finger. Residues 151–238 (KKIVVTEGEI…RVAVLPCKDA (88 aa)) enclose the Toprim domain. The Mg(2+) site is built by Glu157, Asp207, and Asp237. The SF4 helicase domain occupies 281–548 (SEESVGLLFS…TGWLEPSSYS (268 aa)). Residue 312 to 319 (SGSGMGKS) coordinates ATP. The disordered stretch occupies residues 543–566 (EPSSYSGEEESHSESTDWSNDTDF). Positions 550–566 (EEESHSESTDWSNDTDF) are binding to viral DNA polymerase.

This sequence belongs to the Teseptimavirus DNA helicase/primase family. As to quaternary structure, homohexamer. Assembles as a hexamer onto linear or circular ssDNA in the presence of ATP or dTTP. Present in a mixture of heptamers and hexamers in the absence of DNA. Interacts (via C-terminus) with the viral DNA polymerase that is bound to DNA; this interaction is essential to initiate leading-strand DNA synthesis. The priming complex consists of 2 DNA polymerases and 1 helicase-primase hexamer that assemble on the DNA template. Interacts with the single-stranded DNA-binding protein. Part of the replicase complex that includes the DNA polymerase, thioredoxin, the primase/helicase and the single-stranded DNA binding protein. The cofactor is Mg(2+).

It carries out the reaction ATP + H2O = ADP + phosphate + H(+). Its function is as follows. ATP-dependent DNA helicase and primase essential for viral DNA replication and recombination. The helicase moves 5' -&gt; 3' on the lagging strand template, unwinding the DNA duplex ahead of the leading strand polymerase at the replication fork and generating ssDNA for both leading and lagging strand synthesis. ATP or dTTP hydrolysis propels each helicase domain to translocate 2 nt per step sequentially along DNA. Mediates strand transfer when a joint molecule is available and participates in recombinational DNA repair through its role in strand exchange. Primase activity synthesizes short RNA primers at the sequence 5'-GTC-3' on the lagging strand that the polymerase elongates using dNTPs and providing the primase is still present. This Escherichia phage T7 (Bacteriophage T7) protein is DNA helicase/primase.